The sequence spans 184 residues: Female-specific protein transformer (184 aa).

Composition is skewed to basic and acidic residues over residues 1-39 (MKMD…DSRK) and 49-58 (DEVREQDRIR). Disordered stretches follow at residues 1–123 (MKMD…PKII) and 146–184 (YQRL…RPPY). Basic residues-rich tracts occupy residues 59-75 (SLRQ…RSRS) and 84-114 (SRHR…RSPH). Pro residues predominate over residues 150–159 (PRPPPFPPAP).

Its subcellular location is the nucleus speckle. In terms of biological role, member of the regulatory pathway controlling female somatic sexual differentiation, regulated by Sxl. Activates dsx female-specific splicing by promoting the formation of a splicing enhancer complex which consists of tra, tra2 and sr proteins. This Drosophila simulans (Fruit fly) protein is Female-specific protein transformer (tra).